The following is a 255-amino-acid chain: Diphthine synthase (255 aa).

S-adenosyl-L-methionine contacts are provided by residues Leu9, Asp85, Val88, 113-114 (SI), Leu164, Ala207, and His232.

The protein belongs to the diphthine synthase family. In terms of assembly, homodimer.

The catalysed reaction is 2-[(3S)-amino-3-carboxypropyl]-L-histidyl-[translation elongation factor 2] + 3 S-adenosyl-L-methionine = diphthine-[translation elongation factor 2] + 3 S-adenosyl-L-homocysteine + 3 H(+). It functions in the pathway protein modification; peptidyl-diphthamide biosynthesis. In terms of biological role, S-adenosyl-L-methionine-dependent methyltransferase that catalyzes the trimethylation of the amino group of the modified target histidine residue in translation elongation factor 2 (EF-2), to form an intermediate called diphthine. The three successive methylation reactions represent the second step of diphthamide biosynthesis. The sequence is that of Diphthine synthase from Methanococcus maripaludis (strain C7 / ATCC BAA-1331).